The chain runs to 423 residues: Probable sodium/metabolite cotransporter BASS4, chloroplastic (423 aa).

The N-terminal 55 residues, 1 to 55, are a transit peptide targeting the chloroplast; the sequence is MVTTHHLCLLRSTVLSVPVRLRAPRAPPHPRLPTASASASSYHGPTHLRRLRPLR. The segment at 23–45 is disordered; it reads APRAPPHPRLPTASASASSYHGP. 9 helical membrane passes run 96-116, 123-140, 153-173, 182-202, 212-232, 244-264, 284-301, 315-335, and 389-409; these read FLPLALIAGIALALMDPTLGC, LSKYSTFGIFLISGLTLR, AGLFGLASILLFTPFLAQFIM, FITGLAMFCCMPTTLSSGVTL, LALAMTAISNLLGIMIVPLSL, LPTEKLFKSLVTTLLIPIILG, GFSVTSAILLSLVPWIQV, AFAVAVTVGVLLHFALLAFNA, and LLVIPCVAAHINQIIIDSIIV.

The protein belongs to the bile acid:sodium symporter (BASS) (TC 2.A.28) family.

It localises to the membrane. It is found in the plastid. Its subcellular location is the chloroplast envelope. Functionally, may function as sodium-coupled metabolite transporter across the chloroplast envelope. The polypeptide is Probable sodium/metabolite cotransporter BASS4, chloroplastic (BASS4) (Oryza sativa subsp. indica (Rice)).